Reading from the N-terminus, the 217-residue chain is Adenylate kinase (217 aa).

G10–T15 lines the ATP pocket. Positions S30–V59 are NMP. AMP contacts are provided by residues T31, R36, E57–V59, G85–R88, and Q92. The LID stretch occupies residues G126–D163. An ATP-binding site is contributed by R127. Residues C130 and C133 each contribute to the Zn(2+) site. T136 to Y137 contributes to the ATP binding site. Residues C150 and D153 each coordinate Zn(2+). Residues R160 and R171 each coordinate AMP. Residue Q199 coordinates ATP.

The protein belongs to the adenylate kinase family. In terms of assembly, monomer.

The protein resides in the cytoplasm. The enzyme catalyses AMP + ATP = 2 ADP. It functions in the pathway purine metabolism; AMP biosynthesis via salvage pathway; AMP from ADP: step 1/1. Functionally, catalyzes the reversible transfer of the terminal phosphate group between ATP and AMP. Plays an important role in cellular energy homeostasis and in adenine nucleotide metabolism. This chain is Adenylate kinase, found in Bacillus velezensis (strain DSM 23117 / BGSC 10A6 / LMG 26770 / FZB42) (Bacillus amyloliquefaciens subsp. plantarum).